The primary structure comprises 634 residues: Protection of telomeres protein 1 (634 aa).

2 DNA-binding regions span residues 33-48 and 270-273; these read KPPY…SVVT and SYGR.

The protein belongs to the telombin family. In terms of assembly, homodimer or homooligomer. Component of the shelterin complex (telosome) composed of TERF1, TERF2, TINF2, TERF2IP, ACD and POT1. Binds single-stranded telomeric DNA as a monomer. Associated component of the telomerase holoenzyme complex. Found in a complex with TERF1, TINF2 and TNKS1. Interacts with TNKS1. Forms heterodimers with ACD. Identified in a complex with ACD and single-stranded telomeric DNA. Ubiquitous.

The protein resides in the nucleus. Its subcellular location is the chromosome. It is found in the telomere. Functionally, component of the telomerase ribonucleoprotein (RNP) complex that is essential for the replication of chromosome termini. Is a component of the double-stranded telomeric DNA-binding TRF1 complex which is involved in the regulation of telomere length by cis-inhibition of telomerase. Also acts as a single-stranded telomeric DNA-binding protein and thus may act as a downstream effector of the TRF1 complex and may transduce information about telomere maintenance and/or length to the telomere terminus. Component of the shelterin complex (telosome) that is involved in the regulation of telomere length and protection. Shelterin associates with arrays of double-stranded TTAGGG repeats added by telomerase and protects chromosome ends; without its protective activity, telomeres are no longer hidden from the DNA damage surveillance and chromosome ends are inappropriately processed by DNA repair pathways. Binds to two or more telomeric single-stranded 5'-TTAGGG-3' repeats (G-strand) and with high specificity to a minimal telomeric single-stranded 5'-TAGGGTTAG-3' sequence. Binds telomeric single-stranded sequences internally or at proximity of a 3'-end. Its activity is TERT dependent but it does not increase TERT activity by itself. In contrast, the ACD-POT1 heterodimer enhances telomere elongation by increasing telomerase processivity. The protein is Protection of telomeres protein 1 (POT1) of Homo sapiens (Human).